The chain runs to 120 residues: MRWHCMDGGNRIVSMYLTTLYYTKEIVDEKTREQEKGKTSFLTDALLNLIYILFFSSSVFNWTRCHLFDTSVIMLHSFHEDGALTNLISHLPTTTVPQYRQLHVPFAILRSCDLKRKSKK.

Residues 40–62 (SFLTDALLNLIYILFFSSSVFNW) form a helical membrane-spanning segment.

The protein resides in the membrane. This is an uncharacterized protein from Saccharomyces cerevisiae (strain ATCC 204508 / S288c) (Baker's yeast).